A 1564-amino-acid polypeptide reads, in one-letter code: Tetratricopeptide repeat protein 37 (1564 aa).

TPR repeat units lie at residues 6 to 39 (VKAI…EKNN), 40 to 73 (YNAW…EPDQ), 75 to 110 (LAWQ…YRSS), 116 to 149 (YEIC…KEDE), 237 to 271 (IYPL…DPLN), 306 to 339 (PSAW…ATQD), 420 to 453 (AEGH…KPEN), 456 to 492 (YHYY…DPFM), 493 to 527 (SRAF…DDSD), 564 to 597 (KWAW…DPKD), 598 to 631 (SNCW…NPDS), 633 to 665 (YSVY…SGEY), 678 to 713 (MLAK…RPDL), 743 to 776 (LLGN…QSTA), 861 to 894 (VAAW…DPLY), 980 to 1013 (RTAF…LQER), 1020 to 1050 (NSAL…PLTE), 1051 to 1084 (FDDL…AKSD), and 1400 to 1433 (HNAW…ASQQ).

This is Tetratricopeptide repeat protein 37 (ttc37) from Xenopus laevis (African clawed frog).